Consider the following 263-residue polypeptide: 4-hydroxy-2-oxo-heptane-1,7-dioate aldolase (263 aa).

The active-site Proton acceptor is His-45. A substrate-binding site is contributed by Gln-147. Glu-149 provides a ligand contact to a divalent metal cation. Residues Ala-174 and Asp-175 each contribute to the substrate site. Position 175 (Asp-175) interacts with a divalent metal cation.

The protein belongs to the HpcH/HpaI aldolase family. Homohexamer; trimer of dimers. The cofactor is a divalent metal cation.

It carries out the reaction 4-hydroxy-2-oxoheptanedioate = succinate semialdehyde + pyruvate. It participates in aromatic compound metabolism; 4-hydroxyphenylacetate degradation; pyruvate and succinate semialdehyde from 4-hydroxyphenylacetate: step 7/7. Its function is as follows. Catalyzes the reversible retro-aldol cleavage of 4-hydroxy-2-ketoheptane-1,7-dioate (HKHD) to pyruvate and succinic semialdehyde. This chain is 4-hydroxy-2-oxo-heptane-1,7-dioate aldolase, found in Salmonella typhimurium (strain LT2 / SGSC1412 / ATCC 700720).